Here is a 383-residue protein sequence, read N- to C-terminus: Chaperone protein DnaJ (383 aa).

The J domain occupies 5–70 (DYYEVLGVAK…EKRAAYDRFG (66 aa)). The CR-type zinc finger occupies 139-217 (GKTETIRIPT…CSGAGRVNRE (79 aa)). 8 residues coordinate Zn(2+): Cys-152, Cys-155, Cys-169, Cys-172, Cys-191, Cys-194, Cys-205, and Cys-208. CXXCXGXG motif repeat units lie at residues 152-159 (CEACSGTG), 169-176 (CSTCGGYG), 191-198 (CPNCHGRG), and 205-212 (CTACSGAG).

The protein belongs to the DnaJ family. As to quaternary structure, homodimer. Zn(2+) is required as a cofactor.

Its subcellular location is the cytoplasm. Functionally, participates actively in the response to hyperosmotic and heat shock by preventing the aggregation of stress-denatured proteins and by disaggregating proteins, also in an autonomous, DnaK-independent fashion. Unfolded proteins bind initially to DnaJ; upon interaction with the DnaJ-bound protein, DnaK hydrolyzes its bound ATP, resulting in the formation of a stable complex. GrpE releases ADP from DnaK; ATP binding to DnaK triggers the release of the substrate protein, thus completing the reaction cycle. Several rounds of ATP-dependent interactions between DnaJ, DnaK and GrpE are required for fully efficient folding. Also involved, together with DnaK and GrpE, in the DNA replication of plasmids through activation of initiation proteins. This chain is Chaperone protein DnaJ, found in Methylorubrum populi (strain ATCC BAA-705 / NCIMB 13946 / BJ001) (Methylobacterium populi).